A 151-amino-acid polypeptide reads, in one-letter code: Ribosome maturation factor RimP (151 aa).

Belongs to the RimP family.

Its subcellular location is the cytoplasm. In terms of biological role, required for maturation of 30S ribosomal subunits. The protein is Ribosome maturation factor RimP of Photobacterium profundum (strain SS9).